A 641-amino-acid polypeptide reads, in one-letter code: Phosphomethylpyrimidine synthase (641 aa).

Over residues 1–13 (MNIRSNPDTTRPA) the composition is skewed to polar residues. Residues 1–21 (MNIRSNPDTTRPAVTTGGLPS) form a disordered region. Substrate contacts are provided by residues Asn-221, Met-250, Tyr-279, His-315, 335–337 (SRG), 376–379 (DGLR), and Glu-415. His-419 contacts Zn(2+). Tyr-442 contributes to the substrate binding site. Zn(2+) is bound at residue His-483. Cys-563, Cys-566, and Cys-571 together coordinate [4Fe-4S] cluster.

Belongs to the ThiC family. Homodimer. The cofactor is [4Fe-4S] cluster.

The catalysed reaction is 5-amino-1-(5-phospho-beta-D-ribosyl)imidazole + S-adenosyl-L-methionine = 4-amino-2-methyl-5-(phosphooxymethyl)pyrimidine + CO + 5'-deoxyadenosine + formate + L-methionine + 3 H(+). The protein operates within cofactor biosynthesis; thiamine diphosphate biosynthesis. Catalyzes the synthesis of the hydroxymethylpyrimidine phosphate (HMP-P) moiety of thiamine from aminoimidazole ribotide (AIR) in a radical S-adenosyl-L-methionine (SAM)-dependent reaction. The chain is Phosphomethylpyrimidine synthase from Rhodopseudomonas palustris (strain BisB5).